The sequence spans 269 residues: tRNA pseudouridine synthase A (269 aa).

D51 serves as the catalytic Nucleophile. Y109 lines the substrate pocket.

This sequence belongs to the tRNA pseudouridine synthase TruA family. Homodimer.

The enzyme catalyses uridine(38/39/40) in tRNA = pseudouridine(38/39/40) in tRNA. Formation of pseudouridine at positions 38, 39 and 40 in the anticodon stem and loop of transfer RNAs. This Histophilus somni (strain 129Pt) (Haemophilus somnus) protein is tRNA pseudouridine synthase A.